A 350-amino-acid polypeptide reads, in one-letter code: Peptide-N(4)-(N-acetyl-beta-glucosaminyl)asparagine amidase (350 aa).

Residues Cys123, Cys126, Cys157, and Cys160 each coordinate Zn(2+). Cys183 functions as the Nucleophile in the catalytic mechanism. Residues His210 and Asp227 contribute to the active site. Glu230 contacts substrate. The interval 324–350 is disordered; sequence EIPPAAGAAGRQSGSADWKRQRGEDGR. Residues 340-350 show a composition bias toward basic and acidic residues; it reads DWKRQRGEDGR.

The protein belongs to the transglutaminase-like superfamily. PNGase family. The cofactor is Zn(2+).

Its subcellular location is the cytoplasm. The enzyme catalyses Hydrolysis of an N(4)-(acetyl-beta-D-glucosaminyl)asparagine residue in which the glucosamine residue may be further glycosylated, to yield a (substituted) N-acetyl-beta-D-glucosaminylamine and a peptide containing an aspartate residue.. In terms of biological role, specifically deglycosylates the denatured form of N-linked glycoproteins in the cytoplasm and assists their proteasome-mediated degradation. Cleaves the beta-aspartyl-glucosamine (GlcNAc) of the glycan and the amide side chain of Asn, converting Asn to Asp. Prefers proteins containing high-mannose over those bearing complex type oligosaccharides. Can recognize misfolded proteins in the endoplasmic reticulum that are exported to the cytosol to be destroyed and deglycosylate them, while it has no activity toward native proteins. Deglycosylation is a prerequisite for subsequent proteasome-mediated degradation of some, but not all, misfolded glycoproteins. In Eremothecium gossypii (strain ATCC 10895 / CBS 109.51 / FGSC 9923 / NRRL Y-1056) (Yeast), this protein is Peptide-N(4)-(N-acetyl-beta-glucosaminyl)asparagine amidase (PNG1).